We begin with the raw amino-acid sequence, 67 residues long: Large ribosomal subunit protein uL29 (67 aa).

The protein belongs to the universal ribosomal protein uL29 family.

This Ehrlichia ruminantium (strain Gardel) protein is Large ribosomal subunit protein uL29.